The primary structure comprises 115 residues: MNMLMALLVNITLSTLLIIVAFWLPQLNLYTEKANPYECGFDPMGSARLPFSMKFFLVAITFLLFDLEIALLLPLPWAIQMYNINIMMLTAFILVSVLALGLAYEWVQKGLEWTE.

3 consecutive transmembrane segments (helical) span residues Leu-4–Leu-24, Phe-55–Leu-75, and Ile-84–Tyr-104.

Belongs to the complex I subunit 3 family. As to quaternary structure, core subunit of respiratory chain NADH dehydrogenase (Complex I) which is composed of 45 different subunits. Interacts with TMEM186. Interacts with TMEM242.

It localises to the mitochondrion inner membrane. It carries out the reaction a ubiquinone + NADH + 5 H(+)(in) = a ubiquinol + NAD(+) + 4 H(+)(out). Its function is as follows. Core subunit of the mitochondrial membrane respiratory chain NADH dehydrogenase (Complex I) which catalyzes electron transfer from NADH through the respiratory chain, using ubiquinone as an electron acceptor. Essential for the catalytic activity of complex I. The sequence is that of NADH-ubiquinone oxidoreductase chain 3 from Peromyscus melanotis (Black-eared mouse).